Reading from the N-terminus, the 139-residue chain is Bilirubin-inducible fluorescent protein UnaG (139 aa).

(4Z,15Z)-bilirubin IXalpha is bound by residues N57, T61, S80, R112, and 132–134 (RSY).

Belongs to the calycin superfamily. Fatty-acid binding protein (FABP) family. In terms of assembly, monomer. Detected in small-diameter muscle fibers from the white muscle layer from juvenile animals (glass eels) (at protein level). Detected in small-diameter muscle fibers from juvenile animals (glass eels).

Its subcellular location is the cytoplasm. Functionally, beta-barrel protein that binds unconjugated bilirubin with high affinity. Excitation of the bilirubin-bound protein gives rise to green fluorescence, both under normoxia and hypoxia. The apoprotein is not fluorescent. Does not emit fluorescence in the presence of ditauro-bilirubin, urobilin or biliverdin. In Anguilla japonica (Japanese eel), this protein is Bilirubin-inducible fluorescent protein UnaG.